Consider the following 111-residue polypeptide: BET1-like protein (111 aa).

Residues 1–86 lie on the Cytoplasmic side of the membrane; it reads MADWARAQSP…MARSGRDNRK (86 aa). 2 positions are modified to phosphoserine: serine 9 and serine 37. The t-SNARE coiled-coil homology domain occupies 15-77; the sequence is EILDRENKRM…TGSVKRFSTM (63 aa). A helical; Anchor for type IV membrane protein transmembrane segment spans residues 87 to 107; the sequence is LLCGVAVGLIVAFFILSYLLS. At 108 to 111 the chain is on the lumenal side; it reads RART.

As to quaternary structure, component of a SNARE complex consisting of STX5, YKT6, GOSR1 and BET1L. Interacts with STX5.

The protein resides in the golgi apparatus membrane. The protein localises to the golgi apparatus. It localises to the trans-Golgi network membrane. Vesicle SNARE required for targeting and fusion of retrograde transport vesicles with the Golgi complex. Required for the integrity of the Golgi complex. The protein is BET1-like protein of Bos taurus (Bovine).